Here is a 402-residue protein sequence, read N- to C-terminus: Putative F-box protein At3g23960 (402 aa).

Residues 1-23 are disordered; it reads MRSRQLHNVSEDRETLSRRNKRS. One can recognise an F-box domain in the interval 26–73; it reads SLNGHIPIDLLIEIFLKLPVKSIATCRSVSKFWTYVLGRQDFTELFLT.

This chain is Putative F-box protein At3g23960, found in Arabidopsis thaliana (Mouse-ear cress).